We begin with the raw amino-acid sequence, 457 residues long: Arginine biosynthesis bifunctional protein ArgJ, mitochondrial (457 aa).

Thr184, Lys213, Thr224, Glu312, Asn452, and Thr457 together coordinate substrate. The active-site Nucleophile is the Thr224.

The protein belongs to the ArgJ family. As to quaternary structure, heterodimer of an alpha and a beta chain. The alpha and beta chains are autoproteolytically processed from a single precursor protein within the mitochondrion.

Its subcellular location is the mitochondrion matrix. It catalyses the reaction N(2)-acetyl-L-ornithine + L-glutamate = N-acetyl-L-glutamate + L-ornithine. The catalysed reaction is L-glutamate + acetyl-CoA = N-acetyl-L-glutamate + CoA + H(+). The protein operates within amino-acid biosynthesis; L-arginine biosynthesis; L-ornithine and N-acetyl-L-glutamate from L-glutamate and N(2)-acetyl-L-ornithine (cyclic): step 1/1. Its pathway is amino-acid biosynthesis; L-arginine biosynthesis; N(2)-acetyl-L-ornithine from L-glutamate: step 1/4. Catalyzes two activities which are involved in the cyclic version of arginine biosynthesis: the synthesis of acetylglutamate from glutamate and acetyl-CoA, and of ornithine by transacetylation between acetylornithine and glutamate. The chain is Arginine biosynthesis bifunctional protein ArgJ, mitochondrial from Aspergillus terreus (strain NIH 2624 / FGSC A1156).